A 312-amino-acid chain; its full sequence is Glyoxylate/hydroxypyruvate reductase A (312 aa).

The active site involves Arg-227. His-275 acts as the Proton donor in catalysis.

Belongs to the D-isomer specific 2-hydroxyacid dehydrogenase family. GhrA subfamily.

It localises to the cytoplasm. It catalyses the reaction glycolate + NADP(+) = glyoxylate + NADPH + H(+). The enzyme catalyses (R)-glycerate + NAD(+) = 3-hydroxypyruvate + NADH + H(+). The catalysed reaction is (R)-glycerate + NADP(+) = 3-hydroxypyruvate + NADPH + H(+). In terms of biological role, catalyzes the NADPH-dependent reduction of glyoxylate and hydroxypyruvate into glycolate and glycerate, respectively. The protein is Glyoxylate/hydroxypyruvate reductase A of Escherichia coli (strain UTI89 / UPEC).